We begin with the raw amino-acid sequence, 437 residues long: Elongator complex protein 4 (437 aa).

Residues F179–L247 are disordered. The span at K181 to Q192 shows a compositional bias: polar residues. At S183 the chain carries Phosphoserine. Over residues S220–S237 the composition is skewed to low complexity. S242 is subject to Phosphoserine.

The protein belongs to the ELP4 family. In terms of assembly, component of the elongator complex composed of Elp1, Elp2, Elp3, Elp4, Elp5 and Elp6. The elongator complex associates with and stabilizes microtubules; efficient interaction requires the full complex.

It localises to the cytoplasm. Its subcellular location is the nucleus. The protein localises to the cytoskeleton. The protein resides in the spindle. It functions in the pathway tRNA modification; 5-methoxycarbonylmethyl-2-thiouridine-tRNA biosynthesis. Its function is as follows. Component of the elongator complex, which is required for multiple tRNA modifications, including mcm5U (5-methoxycarbonylmethyl uridine), mcm5s2U (5-methoxycarbonylmethyl-2-thiouridine), and ncm5U (5-carbamoylmethyl uridine). The elongator complex catalyzes the formation of carboxymethyluridine in the wobble base at position 34 in tRNAs. Binding by the elongator complex stabilizes microtubules and promotes their growth. This induces central spindle asymmetry, promoting polarized signaling endosome trafficking during asymmetric cell division and cell fate assignation of sensory organ precursor cells. The protein is Elongator complex protein 4 of Drosophila melanogaster (Fruit fly).